A 1235-amino-acid polypeptide reads, in one-letter code: Phosphorylase b kinase regulatory subunit alpha, liver isoform (1235 aa).

The interval 636-655 is disordered; that stretch reads FSPDSEPDLGGYLEDSSPQE. 3 positions are modified to phosphoserine: Ser695, Ser729, and Ser735. The tract at residues 807 to 837 is calmodulin-binding; that stretch reads LSELYGKAGLNQEWSLIRYISGLLRKKVEVL. Phosphoserine occurs at positions 983, 1015, and 1044. The interval 1033 to 1060 is disordered; that stretch reads SIKSVRSSTPSSPTGTSSTDSGGQHLGW. Positions 1039–1055 are enriched in low complexity; it reads SSTPSSPTGTSSTDSGG. Residues 1059–1099 are calmodulin-binding; that stretch reads GWGEQQGQWLRRRRLDGAINRVPVGFYQKVWKILQKCHGLS. Residue Cys1232 is the site of S-farnesyl cysteine attachment.

Belongs to the phosphorylase b kinase regulatory chain family. Hexadecamer of 4 heterotetramers, each composed of alpha, beta, gamma, and delta subunits. Alpha (PHKA1 or PHKA2) and beta (PHKB) are regulatory subunits, gamma (PHKG1 or PHKG2) is the catalytic subunit, and delta is calmodulin. Although the final Cys may be farnesylated, the terminal tripeptide is probably not removed, and the C-terminus is not methylated.

It localises to the cell membrane. Its pathway is glycan biosynthesis; glycogen metabolism. By phosphorylation of various serine residues and by calcium. In terms of biological role, phosphorylase b kinase catalyzes the phosphorylation of serine in certain substrates, including troponin I. The alpha chain may bind calmodulin. This chain is Phosphorylase b kinase regulatory subunit alpha, liver isoform (Phka2), found in Mus musculus (Mouse).